The primary structure comprises 496 residues: Solute carrier family 2, facilitated glucose transporter member 3 (496 aa).

At 1 to 11 the chain is on the cytoplasmic side; it reads MADKKKITASL. The chain crosses the membrane as a helical span at residues 12 to 33; sequence IYAVSVAAIGSLQFGYNTGVIN. Residues 34–65 are Extracellular-facing; it reads APEKIIQAFYNRTLSQRSGETISPELLTSLWS. N-linked (GlcNAc...) asparagine glycosylation is present at N44. A helical membrane pass occupies residues 66-86; sequence LSVAIFSVGGMIGSFSVSLFF. Residues 87 to 91 lie on the Cytoplasmic side of the membrane; it reads NRFGR. Residues 92 to 112 form a helical membrane-spanning segment; that stretch reads RNSMLLVNVLAFAGGALMALS. Residues 113-119 are Extracellular-facing; sequence KIAKAVE. A helical transmembrane segment spans residues 120–143; it reads MLIIGRFIIGLFCGLCTGFVPMYI. Topologically, residues 144–154 are cytoplasmic; sequence SEVSPTSLRGA. A helical transmembrane segment spans residues 155–175; that stretch reads FGTLNQLGIVVGILVAQIFGL. Residue Q160 coordinates D-glucose. Residues 176-184 are Extracellular-facing; that stretch reads EGIMGTEAL. Residues 185–205 form a helical membrane-spanning segment; sequence WPLLLGFTIVPAVLQCVALLF. At 206-270 the chain is on the cytoplasmic side; sequence CPESPRFLLI…LFRSPNYRQP (65 aa). A helical transmembrane segment spans residues 271–291; it reads IIISITLQLSQQLSGINAVFY. Residues 278 to 280 are important for selectivity against fructose; the sequence is QLS. Residues 281–282 and N287 contribute to the D-glucose site; that span reads QQ. At 292-305 the chain is on the extracellular side; the sequence is YSTGIFERAGITQP. Residues 306–326 form a helical membrane-spanning segment; it reads VYATIGAGVVNTVFTVVSLFL. N316 is a D-glucose binding site. Over 327–332 the chain is Cytoplasmic; the sequence is VERAGR. The helical transmembrane segment at 333–353 threads the bilayer; that stretch reads RTLHLVGLGGMAVCAAVMTIA. The Extracellular segment spans residues 354 to 362; that stretch reads LALKEKWIR. A helical transmembrane segment spans residues 363–388; the sequence is YISIVATFGFVALFEIGPGPIPWFIV. D-glucose contacts are provided by E377 and W385. At 389 to 398 the chain is on the cytoplasmic side; that stretch reads AELFSQGPRP. A helical membrane pass occupies residues 399–419; the sequence is AAMAVAGCSNWTSNFLVGMLF. The Extracellular segment spans residues 420–428; the sequence is PYAEKLCGP. The helical transmembrane segment at 429 to 449 threads the bilayer; sequence YVFLIFLVFLLIFFIFTYFKV. Residues 450 to 496 lie on the Cytoplasmic side of the membrane; it reads PETKGRTFEDISRGFEEQVETSSPSSPPIEKNPMVEMNSIEPDKEVA. Residues 464-496 form a disordered region; sequence FEEQVETSSPSSPPIEKNPMVEMNSIEPDKEVA.

Belongs to the major facilitator superfamily. Sugar transporter (TC 2.A.1.1) family. Glucose transporter subfamily.

Its subcellular location is the cell membrane. The protein localises to the perikaryon. The protein resides in the cell projection. The catalysed reaction is D-glucose(out) = D-glucose(in). It carries out the reaction D-galactose(in) = D-galactose(out). Deoxyglucose transport is inhibited by D-glucose, D-galactose and maltose. Galactose transport is inhibited by D-glucose and maltose. In terms of biological role, facilitative glucose transporter. Can also mediate the uptake of various other monosaccharides across the cell membrane. Mediates the uptake of glucose, 2-deoxyglucose, galactose, mannose, xylose and fucose, and probably also dehydroascorbate. Does not mediate fructose transport. Required for mesendoderm differentiation. This is Solute carrier family 2, facilitated glucose transporter member 3 from Gallus gallus (Chicken).